Here is a 431-residue protein sequence, read N- to C-terminus: Argininosuccinate lyase (431 aa).

The protein belongs to the lyase 1 family. Argininosuccinate lyase subfamily.

The protein localises to the cytoplasm. It catalyses the reaction 2-(N(omega)-L-arginino)succinate = fumarate + L-arginine. It functions in the pathway amino-acid biosynthesis; L-arginine biosynthesis; L-arginine from L-ornithine and carbamoyl phosphate: step 3/3. This chain is Argininosuccinate lyase, found in Xanthomonas campestris pv. campestris (strain B100).